We begin with the raw amino-acid sequence, 964 residues long: Iron-responsive element-binding protein 2 (964 aa).

[4Fe-4S] cluster contacts are provided by cysteine 513, cysteine 579, and cysteine 582.

Belongs to the aconitase/IPM isomerase family. In terms of assembly, interacts with RBCK1 only in iron-rich conditions. Interacts (when associated with the 4Fe-4S) with FBXL5. Interacts with CIAO1 and CIAO2A. It depends on [4Fe-4S] cluster as a cofactor. In terms of processing, ubiquitinated and degraded by the proteasome in presence of high level of iron and oxygen. Ubiquitinated by a SCF complex containing FBXL5. Upon iron and oxygen depletion FBXL5 is degraded, preventing ubiquitination and allowing its RNA-binding activity.

The protein resides in the cytoplasm. Functionally, RNA-binding protein that binds to iron-responsive elements (IRES), which are stem-loop structures found in the 5'-UTR of ferritin, and delta aminolevulinic acid synthase mRNAs, and in the 3'-UTR of transferrin receptor mRNA. Binding to the IRE element in ferritin results in the repression of its mRNA translation. Binding of the protein to the transferrin receptor mRNA inhibits the degradation of this otherwise rapidly degraded mRNA. This Sus scrofa (Pig) protein is Iron-responsive element-binding protein 2 (IREB2).